Consider the following 168-residue polypeptide: MTDSQQPGAATEQPKTEFALQKFYLKDVSLECPRSPQVFTGEWKPETNVQLNSQARPLDDQGLFEVELTLTVTTKSGGEVAYLVEVKQAGVFLARGFPKEQMGHLLAAYCPTTLFPFAREAVTDLVSKAGFPQMLLAPVNFDALYAQQLAQNHAGKAGEESAPAGASH.

It belongs to the SecB family. In terms of assembly, homotetramer, a dimer of dimers. One homotetramer interacts with 1 SecA dimer.

It localises to the cytoplasm. Functionally, one of the proteins required for the normal export of preproteins out of the cell cytoplasm. It is a molecular chaperone that binds to a subset of precursor proteins, maintaining them in a translocation-competent state. It also specifically binds to its receptor SecA. The polypeptide is Protein-export protein SecB (Thioalkalivibrio sulfidiphilus (strain HL-EbGR7)).